The sequence spans 503 residues: ATP synthase subunit alpha (503 aa).

Residue glycine 170–threonine 177 participates in ATP binding.

The protein belongs to the ATPase alpha/beta chains family. In terms of assembly, F-type ATPases have 2 components, CF(1) - the catalytic core - and CF(0) - the membrane proton channel. CF(1) has five subunits: alpha(3), beta(3), gamma(1), delta(1), epsilon(1). CF(0) has three main subunits: a(1), b(2) and c(9-12). The alpha and beta chains form an alternating ring which encloses part of the gamma chain. CF(1) is attached to CF(0) by a central stalk formed by the gamma and epsilon chains, while a peripheral stalk is formed by the delta and b chains.

It is found in the cell inner membrane. The catalysed reaction is ATP + H2O + 4 H(+)(in) = ADP + phosphate + 5 H(+)(out). Its function is as follows. Produces ATP from ADP in the presence of a proton gradient across the membrane. The alpha chain is a regulatory subunit. The sequence is that of ATP synthase subunit alpha from Helicobacter pylori (strain G27).